The chain runs to 578 residues: Arginine--tRNA ligase (578 aa).

The 'HIGH' region signature appears at Pro127–His137.

It belongs to the class-I aminoacyl-tRNA synthetase family. Monomer.

The protein resides in the cytoplasm. It carries out the reaction tRNA(Arg) + L-arginine + ATP = L-arginyl-tRNA(Arg) + AMP + diphosphate. This Pseudomonas savastanoi pv. phaseolicola (strain 1448A / Race 6) (Pseudomonas syringae pv. phaseolicola (strain 1448A / Race 6)) protein is Arginine--tRNA ligase.